The chain runs to 281 residues: Probable endonuclease 4 (281 aa).

Histidine 67, histidine 107, glutamate 144, aspartate 178, histidine 181, histidine 215, aspartate 228, histidine 230, and glutamate 260 together coordinate Zn(2+).

Belongs to the AP endonuclease 2 family. Zn(2+) serves as cofactor.

It catalyses the reaction Endonucleolytic cleavage to 5'-phosphooligonucleotide end-products.. Endonuclease IV plays a role in DNA repair. It cleaves phosphodiester bonds at apurinic or apyrimidinic (AP) sites, generating a 3'-hydroxyl group and a 5'-terminal sugar phosphate. The polypeptide is Probable endonuclease 4 (Methanocorpusculum labreanum (strain ATCC 43576 / DSM 4855 / Z)).